The sequence spans 545 residues: Membrane protein insertase YidC (545 aa).

A helical membrane pass occupies residues 8 to 28 (ILLATVLSVGILILWQVIFPK). The tract at residues 31-69 (PPKPAPTPAAEVAKPAAPAAPAPGAAAPAVPAPPPDAPE) is disordered. The span at 38-59 (PAAEVAKPAAPAAPAPGAAAPA) shows a compositional bias: low complexity. 5 helical membrane-spanning segments follow: residues 325 to 345 (IDYG…LYVM), 355 to 375 (WGVA…PLTY), 421 to 441 (LGGC…YAAL), 458 to 478 (LTAH…SFVM), and 497 to 517 (FFPG…TLYI).

It belongs to the OXA1/ALB3/YidC family. Type 1 subfamily. In terms of assembly, interacts with the Sec translocase complex via SecD. Specifically interacts with transmembrane segments of nascent integral membrane proteins during membrane integration.

It localises to the cell inner membrane. In terms of biological role, required for the insertion and/or proper folding and/or complex formation of integral membrane proteins into the membrane. Involved in integration of membrane proteins that insert both dependently and independently of the Sec translocase complex, as well as at least some lipoproteins. Aids folding of multispanning membrane proteins. The polypeptide is Membrane protein insertase YidC (Anaeromyxobacter dehalogenans (strain 2CP-C)).